We begin with the raw amino-acid sequence, 880 residues long: Endoglucanase E-4 (880 aa).

A signal peptide spans 1–46 (MSVTEPPPRRRGRHSRARRFLTSLGATAALTAGMLGVPLATGTAHA). The active-site Nucleophile is the Asp104. Catalysis depends on residues His422, His427, Asp461, and Glu470. Positions 504-652 (PDGPEIFVEA…GVPVWGTAPE (149 aa)) constitute a CBM3 domain. The segment at 647–688 (WGTAPEEGEEPGGGEGPGGGEEPGEDVTPPSAPGSPAVRDVT) is disordered. The region spanning 678–770 (APGSPAVRDV…TVSFTTLAEN (93 aa)) is the Fibronectin type-III domain. The CBM2 domain occupies 771 to 880 (GGGPDASCTV…TLNGEPCALA (110 aa)).

It belongs to the glycosyl hydrolase 9 (cellulase E) family.

The enzyme catalyses Endohydrolysis of (1-&gt;4)-beta-D-glucosidic linkages in cellulose, lichenin and cereal beta-D-glucans.. Its pathway is glycan metabolism; cellulose degradation. This is Endoglucanase E-4 (celD) from Thermobifida fusca (Thermomonospora fusca).